A 349-amino-acid polypeptide reads, in one-letter code: Probable ethanolamine kinase (349 aa).

This sequence belongs to the choline/ethanolamine kinase family.

The protein localises to the cytoplasm. The catalysed reaction is ethanolamine + ATP = phosphoethanolamine + ADP + H(+). Its pathway is phospholipid metabolism; phosphatidylethanolamine biosynthesis; phosphatidylethanolamine from ethanolamine: step 1/3. Functionally, highly specific for ethanolamine phosphorylation. May be a rate-controlling step in phosphatidylethanolamine biosynthesis. The protein is Probable ethanolamine kinase (etnk) of Nematostella vectensis (Starlet sea anemone).